A 129-amino-acid polypeptide reads, in one-letter code: Fluoride-specific ion channel FluC (129 aa).

4 consecutive transmembrane segments (helical) span residues 8 to 28, 34 to 54, 70 to 90, and 102 to 122; these read ILLV…VALW, AVFP…IGFI, IFLV…MIEH, and AALY…LGII. Na(+) contacts are provided by Gly78 and Thr81.

The protein belongs to the fluoride channel Fluc/FEX (TC 1.A.43) family.

It is found in the cell inner membrane. It catalyses the reaction fluoride(in) = fluoride(out). With respect to regulation, na(+) is not transported, but it plays an essential structural role and its presence is essential for fluoride channel function. Its function is as follows. Fluoride-specific ion channel. Important for reducing fluoride concentration in the cell, thus reducing its toxicity. This Chlorobium chlorochromatii (strain CaD3) protein is Fluoride-specific ion channel FluC.